The following is a 75-amino-acid chain: Putative DNA-directed RNA polymerase subunit omega (75 aa).

This sequence belongs to the RNA polymerase subunit omega family.

It is found in the plastid. The protein resides in the chloroplast. It carries out the reaction RNA(n) + a ribonucleoside 5'-triphosphate = RNA(n+1) + diphosphate. Its function is as follows. May be involved in RNA polymerase activity. This Porphyra purpurea (Red seaweed) protein is Putative DNA-directed RNA polymerase subunit omega (rpoZ).